Here is a 79-residue protein sequence, read N- to C-terminus: RNA-binding protein Hfq (79 aa).

The Sm domain maps to 9–69; it reads DTFLNHLRKE…ISTFTPQRPV (61 aa).

It belongs to the Hfq family. As to quaternary structure, homohexamer.

Functionally, RNA chaperone that binds small regulatory RNA (sRNAs) and mRNAs to facilitate mRNA translational regulation in response to envelope stress, environmental stress and changes in metabolite concentrations. Also binds with high specificity to tRNAs. This chain is RNA-binding protein Hfq, found in Brevibacillus brevis (strain 47 / JCM 6285 / NBRC 100599).